The chain runs to 461 residues: Transcription factor GTE3, chloroplastic (461 aa).

Gly residues predominate over residues 1-11 (MASGPIAGGGV). The disordered stretch occupies residues 1–41 (MASGPIAGGGVSKTKHKWSDSGNKSQKRSKPTVANSNSLGL). The transit peptide at 1-51 (MASGPIAGGGVSKTKHKWSDSGNKSQKRSKPTVANSNSLGLEDNHQMMKIS) directs the protein to the chloroplast. A Bromo domain is found at 114 to 220 (KGTVQILKSC…NLFEEKWVPL (107 aa)). In terms of domain architecture, NET spans 298–379 (LVEEASANRD…EYKESLSKKK (82 aa)). Basic and acidic residues predominate over residues 376 to 392 (SKKKEEQGLDSERDAES). The interval 376–461 (SKKKEEQGLD…SSGHESDTGN (86 aa)) is disordered. A compositionally biased stretch (polar residues) spans 393–412 (FHNSVHESNTLVTGLESSKV). Low complexity predominate over residues 429 to 451 (GGSSSSNSSSSGSGSGSSGSDSD). Residues 452–461 (SSGHESDTGN) show a composition bias toward basic and acidic residues.

In terms of assembly, interacts with SIZ1 (via PHD domain). Sumoylated by SIZ1. Sumoylation reduces capacity to bind to acetylated histone H3.

It is found in the plastid. The protein resides in the chloroplast. In terms of biological role, probable transcription factor that binds to acetylated histone H3. The chain is Transcription factor GTE3, chloroplastic (GTE3) from Arabidopsis thaliana (Mouse-ear cress).